Reading from the N-terminus, the 362-residue chain is Peptide chain release factor 1 (362 aa).

Gln-237 carries the post-translational modification N5-methylglutamine.

It belongs to the prokaryotic/mitochondrial release factor family. In terms of processing, methylated by PrmC. Methylation increases the termination efficiency of RF1.

It is found in the cytoplasm. Peptide chain release factor 1 directs the termination of translation in response to the peptide chain termination codons UAG and UAA. This is Peptide chain release factor 1 from Vibrio atlanticus (strain LGP32) (Vibrio splendidus (strain Mel32)).